Reading from the N-terminus, the 558-residue chain is Suppressor of zyg-1 protein 20 (558 aa).

An SUZ domain is found at 45 to 146; sequence KVKAEESSGV…ARNRILGTEY (102 aa). 3 disordered regions span residues 50–132, 205–241, and 374–558; these read ESSG…ERQA, FTQPPPSVSESGGVYNGPPGFQQKQPNFQPTLQQQSL, and QRNQ…NRPQ. Residues 69–81 show a composition bias toward basic and acidic residues; the sequence is EEPKRVFLRRPKD. Polar residues predominate over residues 94-109; the sequence is PPTSADTEEQPVTNVR. Basic and acidic residues predominate over residues 117–131; sequence NQKEKQPAPTYEERQ. Low complexity-rich tracts occupy residues 374–394 and 424–477; these read QRNQVNSYPQQNGAGRGQNRQ and NNGQ…QQQQ. Polar residues-rich tracts occupy residues 478-508 and 545-558; these read NKSGKFGQNRNDMQKNNYQPNLQQPPMSQNP and SASQWPALQQNRPQ.

Interacts (via C-terminus) with atx-2 (via C-terminus); the interaction is RNA independent. Interacts with let-92. In terms of processing, phosphorylated. May be dephosphorylated by let-92.

The protein localises to the cytoplasm. It localises to the cytoskeleton. It is found in the microtubule organizing center. Its subcellular location is the centrosome. The protein resides in the centriole. The protein localises to the nucleus. It localises to the nucleolus. It is found in the chromosome. RNA binding protein that is required for normal cell division and cytokinesis during embryonic development. Functions with RNA-binding protein atx-2 to ensure embryonic cell division, and to this end, plays a role in the regulation of centrosome assembly, position and size, and in astral microtubule outgrowth and nucleation. Furthermore, negatively regulates the levels of the protein kinase zyg-1 at the centrosome. Also involved in ensuring centrosome attachment to the nuclear envelope. The sequence is that of Suppressor of zyg-1 protein 20 from Caenorhabditis elegans.